The primary structure comprises 212 residues: LexA repressor (212 aa).

Residues 26–46 constitute a DNA-binding region (H-T-H motif); that stretch reads VREIGEAVGLSSTSTVHGHID. Active-site for autocatalytic cleavage activity residues include Ser128 and Lys171.

It belongs to the peptidase S24 family. Homodimer.

It catalyses the reaction Hydrolysis of Ala-|-Gly bond in repressor LexA.. Represses a number of genes involved in the response to DNA damage (SOS response), including recA and lexA. In the presence of single-stranded DNA, RecA interacts with LexA causing an autocatalytic cleavage which disrupts the DNA-binding part of LexA, leading to derepression of the SOS regulon and eventually DNA repair. The protein is LexA repressor of Oenococcus oeni (strain ATCC BAA-331 / PSU-1).